A 74-amino-acid polypeptide reads, in one-letter code: ATP synthase subunit 9, mitochondrial (74 aa).

Helical transmembrane passes span methionine 8–phenylalanine 28 and isoleucine 50–isoleucine 70.

This sequence belongs to the ATPase C chain family. In terms of assembly, F-type ATPases have 2 components, CF(1) - the catalytic core - and CF(0) - the membrane proton channel. CF(1) has five subunits: alpha(3), beta(3), gamma(1), delta(1), epsilon(1). CF(0) has three main subunits: a, b and c.

The protein localises to the mitochondrion membrane. In terms of biological role, this protein is one of the chains of the nonenzymatic membrane component (F0) of mitochondrial ATPase. The polypeptide is ATP synthase subunit 9, mitochondrial (ATP9) (Solanum lycopersicum (Tomato)).